Here is a 172-residue protein sequence, read N- to C-terminus: Large ribosomal subunit protein uL10 (172 aa).

The protein belongs to the universal ribosomal protein uL10 family. Part of the ribosomal stalk of the 50S ribosomal subunit. The N-terminus interacts with L11 and the large rRNA to form the base of the stalk. The C-terminus forms an elongated spine to which L12 dimers bind in a sequential fashion forming a multimeric L10(L12)X complex.

Functionally, forms part of the ribosomal stalk, playing a central role in the interaction of the ribosome with GTP-bound translation factors. The chain is Large ribosomal subunit protein uL10 from Francisella tularensis subsp. tularensis (strain FSC 198).